Here is a 512-residue protein sequence, read N- to C-terminus: Circadian clock oscillator protein KaiC (512 aa).

KaiC domains lie at 1-243 (MQFP…ISIF) and 257-512 (VRVS…SSED). Positions 45, 46, 47, 48, 49, 85, 220, 221, 222, 224, 226, 286, 287, 288, 289, 290, 291, and 292 each coordinate ATP. Threonine 49 lines the Mg(2+) pocket. Threonine 291 lines the Mg(2+) pocket. A Mg(2+)-binding site is contributed by glutamate 314. Tryptophan 327 contacts ATP. The residue at position 427 (serine 427) is a Phosphoserine; by autocatalysis. Threonine 428 is subject to Phosphothreonine; by autocatalysis. Positions 447, 453, 454, 455, 457, 459, and 461 each coordinate ATP.

It belongs to the KaiC family. In terms of assembly, homohexamer; hexamerization is dependent on ATP-binding. The KaiABC complex composition changes during the circadian cycle to control KaiC phosphorylation. Complexes KaiC(6), KaiA(2-4):KaiC(6), KaiB(6):KaiC(6) and KaiC(6):KaiB(6):KaiA(12) are among the most important forms, many form cooperatively. KaiC interacts with SasA, activating its autokinase function and leading to RpaA activation. It depends on Mg(2+) as a cofactor. Post-translationally, phosphorylated on serine and threonine residues by autocatalysis. Has a 4 step phosphorylation cycle; the autokinase acts first on Thr-428, then Ser-427. When Ser-427 is modified KaiC switches to an autophosphatase mode, acting first on phospho-Thr-428 then phospho-Ser-427.

The catalysed reaction is L-seryl-[protein] + ATP = O-phospho-L-seryl-[protein] + ADP + H(+). The enzyme catalyses L-threonyl-[protein] + ATP = O-phospho-L-threonyl-[protein] + ADP + H(+). It catalyses the reaction ATP + H2O = ADP + phosphate + H(+). With respect to regulation, the interaction with KaiA enhances its phosphorylation status, while the interaction with KaiB decreases it. Central component of the KaiABC oscillator complex, which constitutes the main circadian regulator in cyanobacteria. Complex composition changes during the circadian cycle to control KaiC phosphorylation. KaiA stimulates KaiC autophosphorylation, while KaiB sequesters KaiA, leading to KaiC autodephosphorylation. Clock output pathways impact the RpaA transcriptional regulator. KaiC enhances the autophosphorylation activity of SasA, which then transfers its phosphate group to RpaA to activate it. KaiB and KaiC together enhance the phospho-RpaA dephosphatase activity of CikA. In terms of biological role, has a weak, temperature-independent ATPase activity; ATPase activity defines the circadian period. The phosphorylation state of KaiC modulates its ATPase activity and effects KaiB binding. In Parasynechococcus marenigrum (strain WH8102), this protein is Circadian clock oscillator protein KaiC.